A 190-amino-acid polypeptide reads, in one-letter code: dTTP/UTP pyrophosphatase (190 aa).

Asp-71 acts as the Proton acceptor in catalysis.

The protein belongs to the Maf family. YhdE subfamily. A divalent metal cation is required as a cofactor.

Its subcellular location is the cytoplasm. The enzyme catalyses dTTP + H2O = dTMP + diphosphate + H(+). It carries out the reaction UTP + H2O = UMP + diphosphate + H(+). Functionally, nucleoside triphosphate pyrophosphatase that hydrolyzes dTTP and UTP. May have a dual role in cell division arrest and in preventing the incorporation of modified nucleotides into cellular nucleic acids. The protein is dTTP/UTP pyrophosphatase of Xanthomonas axonopodis pv. citri (strain 306).